The primary structure comprises 81 residues: Large ribosomal subunit protein bL31B (81 aa).

The protein belongs to the bacterial ribosomal protein bL31 family. Type B subfamily. In terms of assembly, part of the 50S ribosomal subunit.

The chain is Large ribosomal subunit protein bL31B from Oceanobacillus iheyensis (strain DSM 14371 / CIP 107618 / JCM 11309 / KCTC 3954 / HTE831).